An 88-amino-acid chain; its full sequence is Small ribosomal subunit protein uS17 (88 aa).

This sequence belongs to the universal ribosomal protein uS17 family. Part of the 30S ribosomal subunit.

In terms of biological role, one of the primary rRNA binding proteins, it binds specifically to the 5'-end of 16S ribosomal RNA. This chain is Small ribosomal subunit protein uS17, found in Vesicomyosocius okutanii subsp. Calyptogena okutanii (strain HA).